A 121-amino-acid chain; its full sequence is Large ribosomal subunit protein uL18 (121 aa).

The protein belongs to the universal ribosomal protein uL18 family. In terms of assembly, part of the 50S ribosomal subunit; part of the 5S rRNA/L5/L18/L25 subcomplex. Contacts the 5S and 23S rRNAs.

Its function is as follows. This is one of the proteins that bind and probably mediate the attachment of the 5S RNA into the large ribosomal subunit, where it forms part of the central protuberance. The polypeptide is Large ribosomal subunit protein uL18 (Streptococcus equi subsp. zooepidemicus (strain MGCS10565)).